A 288-amino-acid chain; its full sequence is Pantothenate synthetase (288 aa).

30–37 (MGNLHAGH) serves as a coordination point for ATP. The active-site Proton donor is the His-37. Position 61 (Gln-61) interacts with (R)-pantoate. Gln-61 contributes to the beta-alanine binding site. 149–152 (GLKD) is a binding site for ATP. Gln-155 is a (R)-pantoate binding site. ATP is bound by residues Ile-178 and 186–189 (LSSR).

Belongs to the pantothenate synthetase family. In terms of assembly, homodimer.

The protein resides in the cytoplasm. The catalysed reaction is (R)-pantoate + beta-alanine + ATP = (R)-pantothenate + AMP + diphosphate + H(+). The protein operates within cofactor biosynthesis; (R)-pantothenate biosynthesis; (R)-pantothenate from (R)-pantoate and beta-alanine: step 1/1. Functionally, catalyzes the condensation of pantoate with beta-alanine in an ATP-dependent reaction via a pantoyl-adenylate intermediate. The chain is Pantothenate synthetase from Colwellia psychrerythraea (strain 34H / ATCC BAA-681) (Vibrio psychroerythus).